Consider the following 282-residue polypeptide: Phosphoglycerate mutase-like protein 1 (282 aa).

Residue histidine 23 is the Tele-phosphohistidine intermediate of the active site. The active-site Proton donor/acceptor is glutamate 135.

Belongs to the phosphoglycerate mutase family.

May play a role in carbohydrates metabolism. This chain is Phosphoglycerate mutase-like protein 1, found in Arabidopsis thaliana (Mouse-ear cress).